Here is a 216-residue protein sequence, read N- to C-terminus: Uracil-DNA glycosylase (216 aa).

Residue D59 is the Proton acceptor of the active site.

Belongs to the uracil-DNA glycosylase (UDG) superfamily. UNG family.

Its subcellular location is the cytoplasm. It carries out the reaction Hydrolyzes single-stranded DNA or mismatched double-stranded DNA and polynucleotides, releasing free uracil.. Functionally, excises uracil residues from the DNA which can arise as a result of misincorporation of dUMP residues by DNA polymerase or due to deamination of cytosine. This chain is Uracil-DNA glycosylase, found in Staphylococcus epidermidis (strain ATCC 35984 / DSM 28319 / BCRC 17069 / CCUG 31568 / BM 3577 / RP62A).